Consider the following 252-residue polypeptide: tRNA pseudouridine synthase A (252 aa).

The Nucleophile role is filled by aspartate 52. Tyrosine 112 contacts substrate.

This sequence belongs to the tRNA pseudouridine synthase TruA family. In terms of assembly, homodimer.

The catalysed reaction is uridine(38/39/40) in tRNA = pseudouridine(38/39/40) in tRNA. In terms of biological role, formation of pseudouridine at positions 38, 39 and 40 in the anticodon stem and loop of transfer RNAs. The sequence is that of tRNA pseudouridine synthase A from Porphyromonas gingivalis (strain ATCC 33277 / DSM 20709 / CIP 103683 / JCM 12257 / NCTC 11834 / 2561).